The following is a 371-amino-acid chain: 4-hydroxyprotoasukamycin monooxygenase (371 aa).

It belongs to the bacterial luciferase oxidoreductase family. The cofactor is FMN.

The enzyme catalyses 4-hydroxyprotoasukamycin + NADH + O2 + H(+) = asukamycin + NAD(+) + H2O. It functions in the pathway antibiotic biosynthesis. Involved in the biosynthesis of the antibiotic asukamycin. Catalyzes the epoxidation of 4-hydroxyprotoasukamycin to the final product, asukamycin. Can also convert some 4-hydroxyprotoasukamycin derivatives to their asukamycin derivatives, but cannot use protoasukamycin as substrate. Can also use NADPH, but catalytic efficiency is 20-fold higher with NADH. The sequence is that of 4-hydroxyprotoasukamycin monooxygenase from Streptomyces nodosus subsp. asukaensis.